The sequence spans 699 residues: Osmotic avoidance abnormal protein 3 (699 aa).

The Kinesin motor domain maps to 4–327 (SVRVAVRCRP…LRYANRAKNI (324 aa)). Residue 87–94 (GQTGSGKT) coordinates ATP. The stretch at 339-523 (DALLREYQEE…EIEDLHGEFE (185 aa)) forms a coiled coil.

This sequence belongs to the TRAFAC class myosin-kinesin ATPase superfamily. Kinesin family. Kinesin II subfamily. Expressed in an exclusive set of 26 chemosensory neurons whose dendritic endings are exposed to the external environment; six IL2 neurons of the inner labial sensilla, 8 pairs of amphid neurons in the head, and 2 pairs of phasmid neurons in the tail.

Its subcellular location is the cytoplasm. It localises to the cytoskeleton. The protein localises to the cell projection. It is found in the cilium. The protein resides in the cilium axoneme. Its subcellular location is the cilium basal body. Functionally, kinesin motor protein which is required for the anterograde intraflagellar transport (IFT) along the middle segment of the sensory neuron cilia together with the kinesin II motor complex (composed of klp-11, klp-20 and kap-1) and on its own, is required for IFT along the distal segment. In addition, regulates the length of cilia. May have a role during neurogenesis and axonal transport. The sequence is that of Osmotic avoidance abnormal protein 3 from Caenorhabditis elegans.